The sequence spans 338 residues: Phenylalanine--tRNA ligase alpha subunit (338 aa).

Position 253 (glutamate 253) interacts with Mg(2+).

The protein belongs to the class-II aminoacyl-tRNA synthetase family. Phe-tRNA synthetase alpha subunit type 1 subfamily. As to quaternary structure, tetramer of two alpha and two beta subunits. Requires Mg(2+) as cofactor.

It localises to the cytoplasm. The catalysed reaction is tRNA(Phe) + L-phenylalanine + ATP = L-phenylalanyl-tRNA(Phe) + AMP + diphosphate + H(+). This Syntrophotalea carbinolica (strain DSM 2380 / NBRC 103641 / GraBd1) (Pelobacter carbinolicus) protein is Phenylalanine--tRNA ligase alpha subunit.